The sequence spans 261 residues: Cytochrome c oxidase subunit 3 (261 aa).

Residues 1-15 (MAHQAHAYHMVDPSP) lie on the Mitochondrial matrix side of the membrane. The helical transmembrane segment at 16–34 (WPLTGAIAALLLTSGTAVW) threads the bilayer. Residues 35 to 40 (FHFHSL) are Mitochondrial intermembrane-facing. A helical transmembrane segment spans residues 41-66 (TLLTMGNILLLLTMYQWWRDIIREGT). Over 67-72 (FQGHHT) the chain is Mitochondrial matrix. A helical transmembrane segment spans residues 73-105 (PPVQKGLRYGMILFITSEVFFFLGFFWAFYHSS). Residues 106–128 (LSPTPELGGCWPPTGIITLDPFE) are Mitochondrial intermembrane-facing. A helical membrane pass occupies residues 129–152 (VPLLNTAVLLASGVTVTWAHHSIM). Residues 153–155 (EGE) lie on the Mitochondrial matrix side of the membrane. The helical transmembrane segment at 156 to 183 (RKQTIQALTLTILLGFYFTFLQGMEYYE) threads the bilayer. At 184–190 (APFTIAD) the chain is on the mitochondrial intermembrane side. A helical transmembrane segment spans residues 191–223 (GVYGSTFFVATGFHGLHVIIGSTFLAICLLRQI). At 224–232 (QYHFTSEHH) the chain is on the mitochondrial matrix side. The chain crosses the membrane as a helical span at residues 233 to 256 (FGFEAAAWYWHFVDVVWLFLYVSI). At 257–261 (YWWGS) the chain is on the mitochondrial intermembrane side.

The protein belongs to the cytochrome c oxidase subunit 3 family. As to quaternary structure, component of the cytochrome c oxidase (complex IV, CIV), a multisubunit enzyme composed of 14 subunits. The complex is composed of a catalytic core of 3 subunits MT-CO1, MT-CO2 and MT-CO3, encoded in the mitochondrial DNA, and 11 supernumerary subunits COX4I, COX5A, COX5B, COX6A, COX6B, COX6C, COX7A, COX7B, COX7C, COX8 and NDUFA4, which are encoded in the nuclear genome. The complex exists as a monomer or a dimer and forms supercomplexes (SCs) in the inner mitochondrial membrane with NADH-ubiquinone oxidoreductase (complex I, CI) and ubiquinol-cytochrome c oxidoreductase (cytochrome b-c1 complex, complex III, CIII), resulting in different assemblies (supercomplex SCI(1)III(2)IV(1) and megacomplex MCI(2)III(2)IV(2)).

The protein resides in the mitochondrion inner membrane. It carries out the reaction 4 Fe(II)-[cytochrome c] + O2 + 8 H(+)(in) = 4 Fe(III)-[cytochrome c] + 2 H2O + 4 H(+)(out). Component of the cytochrome c oxidase, the last enzyme in the mitochondrial electron transport chain which drives oxidative phosphorylation. The respiratory chain contains 3 multisubunit complexes succinate dehydrogenase (complex II, CII), ubiquinol-cytochrome c oxidoreductase (cytochrome b-c1 complex, complex III, CIII) and cytochrome c oxidase (complex IV, CIV), that cooperate to transfer electrons derived from NADH and succinate to molecular oxygen, creating an electrochemical gradient over the inner membrane that drives transmembrane transport and the ATP synthase. Cytochrome c oxidase is the component of the respiratory chain that catalyzes the reduction of oxygen to water. Electrons originating from reduced cytochrome c in the intermembrane space (IMS) are transferred via the dinuclear copper A center (CU(A)) of subunit 2 and heme A of subunit 1 to the active site in subunit 1, a binuclear center (BNC) formed by heme A3 and copper B (CU(B)). The BNC reduces molecular oxygen to 2 water molecules using 4 electrons from cytochrome c in the IMS and 4 protons from the mitochondrial matrix. The protein is Cytochrome c oxidase subunit 3 (mt-co3) of Salmo salar (Atlantic salmon).